A 100-amino-acid polypeptide reads, in one-letter code: ATP synthase subunit c (100 aa).

2 consecutive transmembrane segments (helical) span residues 26–46 (FSVV…AIGM) and 71–91 (MFIA…IALI).

This sequence belongs to the ATPase C chain family. F-type ATPases have 2 components, F(1) - the catalytic core - and F(0) - the membrane proton channel. F(1) has five subunits: alpha(3), beta(3), gamma(1), delta(1), epsilon(1). F(0) has three main subunits: a(1), b(2) and c(10-14). The alpha and beta chains form an alternating ring which encloses part of the gamma chain. F(1) is attached to F(0) by a central stalk formed by the gamma and epsilon chains, while a peripheral stalk is formed by the delta and b chains.

It localises to the cell inner membrane. F(1)F(0) ATP synthase produces ATP from ADP in the presence of a proton or sodium gradient. F-type ATPases consist of two structural domains, F(1) containing the extramembraneous catalytic core and F(0) containing the membrane proton channel, linked together by a central stalk and a peripheral stalk. During catalysis, ATP synthesis in the catalytic domain of F(1) is coupled via a rotary mechanism of the central stalk subunits to proton translocation. Functionally, key component of the F(0) channel; it plays a direct role in translocation across the membrane. A homomeric c-ring of between 10-14 subunits forms the central stalk rotor element with the F(1) delta and epsilon subunits. The protein is ATP synthase subunit c of Campylobacter fetus subsp. fetus (strain 82-40).